We begin with the raw amino-acid sequence, 796 residues long: Protein tyrosine phosphatase domain-containing protein 1 (796 aa).

Residues 126–297 (YSSWVTDNIL…LIPLRNIFSC (172 aa)) enclose the Tyrosine-protein phosphatase domain. Cys-234 (phosphocysteine intermediate) is an active-site residue. A phosphoserine mark is found at Ser-435 and Ser-437.

Belongs to the protein-tyrosine phosphatase family. Non-receptor class PTPDC1 subfamily.

Its function is as follows. May play roles in cilia formation and/or maintenance. The protein is Protein tyrosine phosphatase domain-containing protein 1 (PTPDC1) of Bos taurus (Bovine).